The sequence spans 343 residues: UDP-3-O-acylglucosamine N-acyltransferase 2 (343 aa).

The active-site Proton acceptor is H251.

The protein belongs to the transferase hexapeptide repeat family. LpxD subfamily. As to quaternary structure, homotrimer.

The catalysed reaction is a UDP-3-O-[(3R)-3-hydroxyacyl]-alpha-D-glucosamine + a (3R)-hydroxyacyl-[ACP] = a UDP-2-N,3-O-bis[(3R)-3-hydroxyacyl]-alpha-D-glucosamine + holo-[ACP] + H(+). It participates in bacterial outer membrane biogenesis; LPS lipid A biosynthesis. Its function is as follows. Catalyzes the N-acylation of UDP-3-O-acylglucosamine using 3-hydroxyacyl-ACP as the acyl donor. Is involved in the biosynthesis of lipid A, a phosphorylated glycolipid that anchors the lipopolysaccharide to the outer membrane of the cell. This Legionella pneumophila subsp. pneumophila (strain Philadelphia 1 / ATCC 33152 / DSM 7513) protein is UDP-3-O-acylglucosamine N-acyltransferase 2.